Consider the following 540-residue polypeptide: Cytochrome P450 monooxygenase prx8 (540 aa).

Residues alanine 50–alanine 68 form a helical membrane-spanning segment. Asparagine 460 is a glycosylation site (N-linked (GlcNAc...) asparagine). Cysteine 483 lines the heme pocket.

Belongs to the cytochrome P450 family. Heme is required as a cofactor.

It localises to the membrane. Its pathway is sesquiterpene biosynthesis. Functionally, cytochrome P450 monooxygenase; part of the gene cluster that mediates the biosynthesis of PR-toxin, a bicyclic sesquiterpene belonging to the eremophilane class and acting as a mycotoxin. The first step of the pathway is catalyzed by the aristolochene synthase which performs the cyclization of trans,trans-farnesyl diphosphate (FPP) to the bicyclic sesquiterpene aristolochene. Following the formation of aristolochene, the non-oxygenated aristolochene is converted to the trioxygenated intermediate eremofortin B, via 7-epi-neopetasone. This conversion appears to involve three enzymes, a hydroxysterol oxidase-like enzyme, the quinone-oxidase prx3 that forms the quinone-type-structure in the bicyclic nucleus of aristolochene with the C8-oxo group and the C-3 hydroxyl group, and the P450 monooxygenase prx9 that introduces the epoxide at the double bond between carbons 1 and 2. No monoxy or dioxy-intermediates have been reported to be released to the broth, so these three early oxidative reactions may be coupled together. Eremofortin B is further oxidized by another P450 monooxygenase, that introduces a second epoxide between carbons 7 and 11 prior to acetylation to eremofortin A by the acetyltransferase prx11. The second epoxidation may be performed by a second P450 monooxygenase. After the acetylation step, eremofortin A is converted to eremofortin C and then to PR-toxin. First the conversion of eremofortin A to eremofortin C proceeds by oxidation of the side chain of the molecule at C-12 and is catalyzed by the short-chain oxidoreductase prx1. The cytochrome P450 monooxygenase prx8 also plays a role in this step. The primary alcohol formed at C-12 is finally oxidized by the short-chain alcohol dehydrogenase prx4 that forms PR-toxin. In Penicillium rubens (strain ATCC 28089 / DSM 1075 / NRRL 1951 / Wisconsin 54-1255) (Penicillium chrysogenum), this protein is Cytochrome P450 monooxygenase prx8.